Here is a 264-residue protein sequence, read N- to C-terminus: 3-methyl-2-oxobutanoate hydroxymethyltransferase (264 aa).

Residues Asp-45 and Asp-84 each contribute to the Mg(2+) site. 3-methyl-2-oxobutanoate contacts are provided by residues 45-46, Asp-84, and Lys-113; that span reads DS. Glu-115 lines the Mg(2+) pocket. Glu-182 (proton acceptor) is an active-site residue.

This sequence belongs to the PanB family. In terms of assembly, homodecamer; pentamer of dimers. Mg(2+) serves as cofactor.

The protein localises to the cytoplasm. The enzyme catalyses 3-methyl-2-oxobutanoate + (6R)-5,10-methylene-5,6,7,8-tetrahydrofolate + H2O = 2-dehydropantoate + (6S)-5,6,7,8-tetrahydrofolate. Its pathway is cofactor biosynthesis; (R)-pantothenate biosynthesis; (R)-pantoate from 3-methyl-2-oxobutanoate: step 1/2. Catalyzes the reversible reaction in which hydroxymethyl group from 5,10-methylenetetrahydrofolate is transferred onto alpha-ketoisovalerate to form ketopantoate. This chain is 3-methyl-2-oxobutanoate hydroxymethyltransferase, found in Caldicellulosiruptor saccharolyticus (strain ATCC 43494 / DSM 8903 / Tp8T 6331).